Reading from the N-terminus, the 274-residue chain is Large ribosomal subunit protein uL2 (274 aa).

The interval 222 to 274 (GVAMNPVDHPHGGGEGRGKGHHPQSPWGQLAKGYKTRRGKKASDKLIVRRRNG) is disordered. The segment covering 229-239 (DHPHGGGEGRG) has biased composition (basic and acidic residues).

This sequence belongs to the universal ribosomal protein uL2 family. In terms of assembly, part of the 50S ribosomal subunit. Forms a bridge to the 30S subunit in the 70S ribosome.

One of the primary rRNA binding proteins. Required for association of the 30S and 50S subunits to form the 70S ribosome, for tRNA binding and peptide bond formation. It has been suggested to have peptidyltransferase activity; this is somewhat controversial. Makes several contacts with the 16S rRNA in the 70S ribosome. This chain is Large ribosomal subunit protein uL2, found in Thermosipho melanesiensis (strain DSM 12029 / CIP 104789 / BI429).